Consider the following 482-residue polypeptide: BTB/POZ domain-containing protein 6-B (482 aa).

Positions 80–150 constitute a BTB domain; it reads ADVHFVVGPP…MYSDEIELEA (71 aa).

As to quaternary structure, interacts with cul3. Interacts (via BTB domain) with zbtb16/plzf. In terms of tissue distribution, in embryos, expressed in the cranial ganglia.

The protein localises to the cytoplasm. The protein resides in the nucleus. Its function is as follows. Adapter protein for the cul3 E3 ubiquitin-protein ligase complex. Promotes the export of zbtb16/plzf from the nucleus to the cytoplasm and targets zbtb16/plzf for ubiquitination and degradation. Up-regulates neurog1 expression and antagonizes zbtb16/plzf, to promote neurogenesis. The polypeptide is BTB/POZ domain-containing protein 6-B (btbd6b) (Danio rerio (Zebrafish)).